The primary structure comprises 135 residues: ATP synthase epsilon chain (135 aa).

Belongs to the ATPase epsilon chain family. In terms of assembly, F-type ATPases have 2 components, CF(1) - the catalytic core - and CF(0) - the membrane proton channel. CF(1) has five subunits: alpha(3), beta(3), gamma(1), delta(1), epsilon(1). CF(0) has three main subunits: a, b and c.

The protein localises to the cell inner membrane. In terms of biological role, produces ATP from ADP in the presence of a proton gradient across the membrane. The polypeptide is ATP synthase epsilon chain (Rhizobium etli (strain CIAT 652)).